The following is a 420-amino-acid chain: 2',3'-cyclic-nucleotide 3'-phosphodiesterase (420 aa).

Serine 9 carries the phosphoserine modification. Residue tyrosine 110 is modified to Phosphotyrosine. Phosphoserine occurs at positions 169, 227, and 239. Histidine 250 serves as the catalytic Proton acceptor. Substrate is bound at residue threonine 252. Residue histidine 329 is the Proton donor of the active site. Residue threonine 331 participates in substrate binding. Serine 358 is modified (phosphoserine). Cysteine 417 is subject to Cysteine methyl ester. A lipid anchor (S-farnesyl cysteine) is attached at cysteine 417. Positions 418–420 (TII) are cleaved as a propeptide — removed in mature form.

The protein belongs to the 2H phosphoesterase superfamily. CNPase family. In terms of assembly, exists as monomers and homodimers.

It localises to the membrane. The protein resides in the melanosome. The catalysed reaction is a nucleoside 2',3'-cyclic phosphate + H2O = a nucleoside 2'-phosphate + H(+). Its function is as follows. Catalyzes the formation of 2'-nucleotide products from 2',3'-cyclic substrates. May participate in RNA metabolism in the myelinating cell, CNP is the third most abundant protein in central nervous system myelin. The protein is 2',3'-cyclic-nucleotide 3'-phosphodiesterase of Mus musculus (Mouse).